Here is a 326-residue protein sequence, read N- to C-terminus: Phenylserine dehydratase (326 aa).

Monomer. It depends on pyridoxal 5'-phosphate as a cofactor.

The catalysed reaction is L-threo-3-phenylserine = 3-phenylpyruvate + NH4(+). Its activity is regulated as follows. Inhibited by phenylhydrazine, hydroxylamine, p-chloromercuribenzoate, and HgCl(2). This chain is Phenylserine dehydratase, found in Ralstonia pickettii (Burkholderia pickettii).